Here is a 912-residue protein sequence, read N- to C-terminus: Tiger protein E1 (912 aa).

An N-terminal signal peptide occupies residues 1 to 22 (MKLKHLTIFLFIFIYRFLFVKS). At 23 to 815 (DCYLINNERP…YSENKSSGFP (793 aa)) the chain is on the extracellular side. N-linked (GlcNAc...) asparagine glycosylation is found at Asn54, Asn108, Asn164, Asn183, Asn232, Asn268, Asn323, Asn356, Asn398, Asn407, Asn568, Asn637, Asn653, Asn658, Asn706, Asn716, Asn763, Asn774, Asn781, and Asn809. 2 IPT/TIG domains span residues 532–609 (SSDQ…GPFT) and 612–686 (PVIE…PLII). An IPT/TIG 3 domain is found at 715 to 796 (TNTSDIDQTA…DGQYFIAQIF (82 aa)). A helical transmembrane segment spans residues 816-836 (NEMYIGIVAIIIFLALIFFAI). At 837–912 (KTQVEKYIEE…IRCCFKEHTD (76 aa)) the chain is on the cytoplasmic side.

It localises to the cell membrane. The polypeptide is Tiger protein E1 (tgrE1) (Dictyostelium discoideum (Social amoeba)).